Consider the following 439-residue polypeptide: Ribosomal protein uS12 methylthiotransferase RimO (439 aa).

The 113-residue stretch at 7–119 (KQLCLISLGC…IDIMIAKKQN (113 aa)) folds into the MTTase N-terminal domain. [4Fe-4S] cluster-binding residues include C16, C50, C82, C151, C155, and C158. The 229-residue stretch at 137–365 (TGSSVHAYVK…NKIALKHQNN (229 aa)) folds into the Radical SAM core domain.

Belongs to the methylthiotransferase family. RimO subfamily. Requires [4Fe-4S] cluster as cofactor.

The protein localises to the cytoplasm. It carries out the reaction L-aspartate(89)-[ribosomal protein uS12]-hydrogen + (sulfur carrier)-SH + AH2 + 2 S-adenosyl-L-methionine = 3-methylsulfanyl-L-aspartate(89)-[ribosomal protein uS12]-hydrogen + (sulfur carrier)-H + 5'-deoxyadenosine + L-methionine + A + S-adenosyl-L-homocysteine + 2 H(+). Functionally, catalyzes the methylthiolation of an aspartic acid residue of ribosomal protein uS12. The chain is Ribosomal protein uS12 methylthiotransferase RimO from Helicobacter pylori (strain Shi470).